The following is a 457-amino-acid chain: Heme sensor protein HssS (457 aa).

2 helical membrane-spanning segments follow: residues 9–29 (IAIYSITVILFSALISFVLTN) and 164–184 (TFLAVLLMLLLFISISLVIAS). The HAMP domain occupies 186–238 (YSIIRPVKKLKLATERLIDGDFETPIKQTRKDEIGTLQYHFNKMRESLGQVDQ). One can recognise a Histidine kinase domain in the interval 246 to 456 (NVSHEIKTPL…TFTITLPNNS (211 aa)). H249 carries the phosphohistidine; by autocatalysis modification.

In terms of processing, autophosphorylated.

It is found in the cell membrane. It catalyses the reaction ATP + protein L-histidine = ADP + protein N-phospho-L-histidine.. Its function is as follows. Member of the two-component regulatory system HssS/HssR involved in intracellular heme homeostasis and tempering of staphylococcal virulence. HssS functions as a heme sensor histidine kinase which is autophosphorylated at a histidine residue and transfers its phosphate group to an aspartate residue of HssR. HssR/HssS activates the expression of hrtAB, an efflux pump, in response to extracellular heme, hemin, hemoglobin or blood. This Staphylococcus aureus (strain USA300) protein is Heme sensor protein HssS (hssS).